Reading from the N-terminus, the 141-residue chain is Large ribosomal subunit protein uL11 (141 aa).

The protein belongs to the universal ribosomal protein uL11 family. As to quaternary structure, part of the ribosomal stalk of the 50S ribosomal subunit. Interacts with L10 and the large rRNA to form the base of the stalk. L10 forms an elongated spine to which L12 dimers bind in a sequential fashion forming a multimeric L10(L12)X complex. In terms of processing, one or more lysine residues are methylated.

Functionally, forms part of the ribosomal stalk which helps the ribosome interact with GTP-bound translation factors. In Oceanobacillus iheyensis (strain DSM 14371 / CIP 107618 / JCM 11309 / KCTC 3954 / HTE831), this protein is Large ribosomal subunit protein uL11.